Consider the following 240-residue polypeptide: 1-(5-phosphoribosyl)-5-[(5-phosphoribosylamino)methylideneamino] imidazole-4-carboxamide isomerase (240 aa).

Aspartate 8 (proton acceptor) is an active-site residue. Aspartate 129 serves as the catalytic Proton donor.

The protein belongs to the HisA/HisF family.

The protein resides in the cytoplasm. It catalyses the reaction 1-(5-phospho-beta-D-ribosyl)-5-[(5-phospho-beta-D-ribosylamino)methylideneamino]imidazole-4-carboxamide = 5-[(5-phospho-1-deoxy-D-ribulos-1-ylimino)methylamino]-1-(5-phospho-beta-D-ribosyl)imidazole-4-carboxamide. The protein operates within amino-acid biosynthesis; L-histidine biosynthesis; L-histidine from 5-phospho-alpha-D-ribose 1-diphosphate: step 4/9. The polypeptide is 1-(5-phosphoribosyl)-5-[(5-phosphoribosylamino)methylideneamino] imidazole-4-carboxamide isomerase (Oceanobacillus iheyensis (strain DSM 14371 / CIP 107618 / JCM 11309 / KCTC 3954 / HTE831)).